The primary structure comprises 259 residues: MILERIVTDNLPDLERRKMRLPLAKLQELVLDIPYPPIDMAMKLKGRQVRLIAEVKKASPSKGIIRSDFDPVDIAGIYARNGASAISVLTEEHHFMGSLDNLKKIRESGVASKLPLLRKDFIHDPYQVYESRLYGADAILLIVAMLSPERLQELLSLSHKLGMKCLVEVHTRSELEIALESNARIIGLNNRDLHTFKIDLTVTERLRPLIPPECIVVSESGIQTRADISRLEELGVDAVLVGEALTASVDIAAKMRELL.

It belongs to the TrpC family.

The enzyme catalyses 1-(2-carboxyphenylamino)-1-deoxy-D-ribulose 5-phosphate + H(+) = (1S,2R)-1-C-(indol-3-yl)glycerol 3-phosphate + CO2 + H2O. It participates in amino-acid biosynthesis; L-tryptophan biosynthesis; L-tryptophan from chorismate: step 4/5. The polypeptide is Indole-3-glycerol phosphate synthase (Dehalococcoides mccartyi (strain CBDB1)).